A 462-amino-acid polypeptide reads, in one-letter code: MPLLLLSALLPFSLMAGPTPSTGKELSAASFLQDILQRYGENESLSMPQLQSLLENLEVGKGGGNQRNMSQCLSSSTLFAAHNLTSGSVVDAEGFQSFCPTILQQLETRACQESPAFQNETTPGAEGRPSPGEVWGYGFLCVTVISLCSLFGAGVVPFMKKACYKRLLLFCIALAIGTLFSNALFQLIPEAFGFNPLEDSYVFTSSVIFGGFYLFFFTEKVLKMMLKQKHEHGHSHYSADTSKRDAEEGVTEKLQNGDLDHMIPPPHGSESDLRGDEKAVQQQDLPGQQSSCYWLKGIRYSDIGTLAWMITLSDGLHNFIDGLAIGASFTVSVFQGVSTSIAILCEEFPHELGDFVILLNAGMSIPQALFFNFLSACCCYLGLAFGILAGSHFSSNWIFALAGGMFLYIALSDMFPEMNEVSKEDEEGGRAFSAFMIQNAGLLTGFAIMLLLTTFSGQIQLG.

The signal sequence occupies residues 1-16 (MPLLLLSALLPFSLMA). Topologically, residues 17-138 (GPTPSTGKEL…PSPGEVWGYG (122 aa)) are extracellular. Residues Asn-42, Asn-68, Asn-83, and Asn-119 are each glycosylated (N-linked (GlcNAc...) asparagine). A helical membrane pass occupies residues 139–159 (FLCVTVISLCSLFGAGVVPFM). At 160 to 167 (KKACYKRL) the chain is on the cytoplasmic side. The helical transmembrane segment at 168–188 (LLFCIALAIGTLFSNALFQLI) threads the bilayer. The Extracellular segment spans residues 189–201 (PEAFGFNPLEDSY). Residues 202–222 (VFTSSVIFGGFYLFFFTEKVL) traverse the membrane as a helical segment. Residues 223 to 322 (KMMLKQKHEH…SDGLHNFIDG (100 aa)) are Cytoplasmic-facing. The HHHGHXHX-motif signature appears at 230–237 (HEHGHSHY). Positions 235–285 (SHYSADTSKRDAEEGVTEKLQNGDLDHMIPPPHGSESDLRGDEKAVQQQDL) are disordered. Basic and acidic residues-rich tracts occupy residues 241–251 (TSKRDAEEGVT) and 269–279 (SESDLRGDEKA). The helical transmembrane segment at 323–343 (LAIGASFTVSVFQGVSTSIAI) threads the bilayer. The Extracellular segment spans residues 344–367 (LCEEFPHELGDFVILLNAGMSIPQ). An XEXPHE-motif motif is present at residues 346-351 (EEFPHE). The chain crosses the membrane as a helical span at residues 368-388 (ALFFNFLSACCCYLGLAFGIL). Residues 389-396 (AGSHFSSN) are Cytoplasmic-facing. A helical membrane pass occupies residues 397 to 417 (WIFALAGGMFLYIALSDMFPE). The Extracellular segment spans residues 418-431 (MNEVSKEDEEGGRA). A helical transmembrane segment spans residues 432 to 452 (FSAFMIQNAGLLTGFAIMLLL). Residues 453 to 462 (TTFSGQIQLG) lie on the Cytoplasmic side of the membrane.

The protein belongs to the ZIP transporter (TC 2.A.5) family. In terms of assembly, homotrimer.

The protein localises to the cell membrane. Its subcellular location is the apical cell membrane. It localises to the basolateral cell membrane. The protein resides in the early endosome membrane. It is found in the late endosome membrane. The protein localises to the lysosome membrane. The enzyme catalyses Zn(2+)(out) + 2 hydrogencarbonate(out) = Zn(2+)(in) + 2 hydrogencarbonate(in). The catalysed reaction is Mn(2+)(out) + 2 hydrogencarbonate(out) = Mn(2+)(in) + 2 hydrogencarbonate(in). It carries out the reaction Fe(2+)(out) + 2 hydrogencarbonate(out) = Fe(2+)(in) + 2 hydrogencarbonate(in). It catalyses the reaction Cd(2+)(out) + 2 hydrogencarbonate(out) = Cd(2+)(in) + 2 hydrogencarbonate(in). Functionally, electroneutral transporter of the plasma membrane mediating the cellular uptake of the divalent metal cations zinc, manganese and iron that are important for tissue homeostasis, metabolism, development and immunity. Functions as an energy-dependent symporter, transporting through the membranes an electroneutral complex composed of a divalent metal cation and two bicarbonate anions. Beside these endogenous cellular substrates, can also import cadmium a non-essential metal which is cytotoxic and carcinogenic. This is Metal cation symporter ZIP14 from Xenopus tropicalis (Western clawed frog).